A 284-amino-acid chain; its full sequence is Shikimate dehydrogenase (NADP(+)) (284 aa).

Shikimate contacts are provided by residues 20–22 (SIS) and Ser67. Lys71 serves as the catalytic Proton acceptor. Asp83 provides a ligand contact to NADP(+). Shikimate contacts are provided by Asn92 and Asp107. NADP(+) is bound by residues 129-133 (GAGGA) and Ile227. Tyr229 lines the shikimate pocket. Gly250 lines the NADP(+) pocket.

Belongs to the shikimate dehydrogenase family. In terms of assembly, homodimer.

The enzyme catalyses shikimate + NADP(+) = 3-dehydroshikimate + NADPH + H(+). It participates in metabolic intermediate biosynthesis; chorismate biosynthesis; chorismate from D-erythrose 4-phosphate and phosphoenolpyruvate: step 4/7. In terms of biological role, involved in the biosynthesis of the chorismate, which leads to the biosynthesis of aromatic amino acids. Catalyzes the reversible NADPH linked reduction of 3-dehydroshikimate (DHSA) to yield shikimate (SA). This is Shikimate dehydrogenase (NADP(+)) from Streptococcus pneumoniae (strain 70585).